The chain runs to 152 residues: MHCPYCNASDTKVIDSRLAAEGAQVRRRRSCNSCQERFTTFEVVEVVMPRIIKSSGKIEPYDNDKLRRSILLPLQKRPITIDEQEAMISRIEKRVRQMGEREVSSKVLGEIIMSELKTLDDVAYVRFASVYRDFQDIDAFHQEIANIRPNDK.

A zinc finger lies at 3-34 (CPYCNASDTKVIDSRLAAEGAQVRRRRSCNSC). Residues 49–139 (PRIIKSSGKI…VYRDFQDIDA (91 aa)) enclose the ATP-cone domain.

The protein belongs to the NrdR family. It depends on Zn(2+) as a cofactor.

Negatively regulates transcription of bacterial ribonucleotide reductase nrd genes and operons by binding to NrdR-boxes. This is Transcriptional repressor NrdR from Psychrobacter arcticus (strain DSM 17307 / VKM B-2377 / 273-4).